The primary structure comprises 544 residues: Chaperonin GroEL (544 aa).

Residues 30–33 (TLGP), K51, 87–91 (DGTTT), G415, 481–483 (DAL), and D497 contribute to the ATP site.

It belongs to the chaperonin (HSP60) family. As to quaternary structure, forms a cylinder of 14 subunits composed of two heptameric rings stacked back-to-back. Interacts with the co-chaperonin GroES.

The protein localises to the cytoplasm. It catalyses the reaction ATP + H2O + a folded polypeptide = ADP + phosphate + an unfolded polypeptide.. Together with its co-chaperonin GroES, plays an essential role in assisting protein folding. The GroEL-GroES system forms a nano-cage that allows encapsulation of the non-native substrate proteins and provides a physical environment optimized to promote and accelerate protein folding. The protein is Chaperonin GroEL of Chlamydia trachomatis serovar L2 (strain ATCC VR-902B / DSM 19102 / 434/Bu).